A 399-amino-acid polypeptide reads, in one-letter code: Bombesin receptor subtype-3 (399 aa).

Residues 1-41 (MSQKQPQSPNQTLISITNDTESSSSVVSNDTTNKGWTGDNS) are Extracellular-facing. Residues Asn10 and Asn18 are each glycosylated (N-linked (GlcNAc...) asparagine). The helical transmembrane segment at 42-63 (PGIEALCAIYITYAVIISVGIL) threads the bilayer. At 64 to 82 (GNAILIKVFFKTKSMQTVP) the chain is on the cytoplasmic side. The helical transmembrane segment at 83–103 (NIFITSLALGDLLLLLTCVPV) threads the bilayer. Over 104–121 (DATHYLAEGWLFGRIGCK) the chain is Extracellular. A disulfide bridge connects residues Cys120 and Cys203. A helical transmembrane segment spans residues 122–143 (VLSFIRLTSVGVSVFTLTILSA). Topologically, residues 144-163 (DRYKAVVKPLERQPSNAILK) are cytoplasmic. A helical transmembrane segment spans residues 164-184 (TCAKAGCIWIMSMIFALPEAI). Residues 185 to 220 (FSNVHTLRDPNKNMTSEWCAFYPVSEKLLQEIHALL) are Extracellular-facing. A helical transmembrane segment spans residues 221 to 241 (SFLVFYIIPLSIISVYYSLIA). The Cytoplasmic segment spans residues 242–272 (RTLYKSTLNIPTEEQSHARKQVESRKRIAKT). Residues 273-293 (VLVLVALFALCWLPNHLLNLY) form a helical membrane-spanning segment. At 294-313 (HSFTHKAYEDSSAIHFIVTI) the chain is on the extracellular side. A helical membrane pass occupies residues 314–333 (FSRVLAFSNSCVNPFALYWL). Residues 334–399 (SKTFQKQFKA…RPMKKEENRV (66 aa)) lie on the Cytoplasmic side of the membrane. Cys347 carries the S-palmitoyl cysteine lipid modification.

It belongs to the G-protein coupled receptor 1 family. In terms of assembly, interacts with C6orf89. In terms of tissue distribution, mainly in uteri of pregnant animals.

It is found in the cell membrane. Role in sperm cell division, maturation, or function. The relative order of ligand affinity is GRP = neuromedin-C &gt;&gt; neuromedin-B. This receptor mediates its action by association with G proteins that activate a phosphatidylinositol-calcium second messenger system. The protein is Bombesin receptor subtype-3 (BRS3) of Cavia porcellus (Guinea pig).